The sequence spans 162 residues: Class I hydrophobin 3 (162 aa).

2 disulfide bridges follow: Cys36/Cys150 and Cys151/Cys159.

The protein belongs to the fungal hydrophobin family. As to quaternary structure, self-assembles to form functional amyloid fibrils called rodlets. Self-assembly into fibrillar rodlets occurs spontaneously at hydrophobic:hydrophilic interfaces and the rodlets further associate laterally to form amphipathic monolayers.

The protein localises to the secreted. The protein resides in the cell wall. In terms of biological role, aerial growth, conidiation, and dispersal of filamentous fungi in the environment rely upon a capability of their secreting small amphipathic proteins called hydrophobins (HPBs) with low sequence identity. Class I can self-assemble into an outermost layer of rodlet bundles on aerial cell surfaces, conferring cellular hydrophobicity that supports fungal growth, development and dispersal; whereas Class II form highly ordered films at water-air interfaces through intermolecular interactions but contribute nothing to the rodlet structure. In Coprinopsis cinerea (strain Okayama-7 / 130 / ATCC MYA-4618 / FGSC 9003) (Inky cap fungus), this protein is Class I hydrophobin 3.